The primary structure comprises 114 residues: Protein yippee-like (114 aa).

The Yippee domain maps to 14–111 (RTYSCVHCRA…IELAHMIKEN (98 aa)). Positions 18, 21, 74, and 77 each coordinate Zn(2+).

This sequence belongs to the yippee family.

Its function is as follows. Involved in regulating synaptic transmission in presynaptic neurons. In class IV dendritic arborization neurons (nociceptors), involved in regulating activation of their second-order neurons (SONs) and maintaining synaptic contact between nociceptors and their SONs. This is Protein yippee-like from Drosophila melanogaster (Fruit fly).